Consider the following 3396-residue polypeptide: Versican core protein (3396 aa).

Residues M1 to A20 form the signal peptide. Positions L21–T146 constitute an Ig-like V-type domain. Disulfide bonds link C44–C130, C172–C243, C196–C217, C270–C345, and C294–C315. The N-linked (GlcNAc...) asparagine glycan is linked to N57. Link domains are found at residues V150–V245 and D251–K347. N330 is a glycosylation site (N-linked (GlcNAc...) asparagine). A GAG-alpha (glucosaminoglycan attachment domain) region spans residues P348 to G1335. Polar residues predominate over residues A420 to T430. Disordered regions lie at residues A420–Y439 and S603–W622. The N-linked (GlcNAc...) asparagine glycan is linked to N615. The O-linked (Xyl...) (chondroitin sulfate) serine glycan is linked to S659. N-linked (GlcNAc...) asparagine glycosylation is found at N782 and N809. Disordered regions lie at residues E807–A829, I1126–L1154, and R1277–T1316. Residues T811–S824 are compositionally biased toward polar residues. A compositionally biased stretch (low complexity) spans E1143 to L1154. N1332 and N1398 each carry an N-linked (GlcNAc...) asparagine glycan. The interval R1336–G3089 is GAG-beta. Disordered stretches follow at residues V1420–E1497 and F1510–P1539. Positions K1422–Q1433 are enriched in basic and acidic residues. N-linked (GlcNAc...) asparagine glycosylation is found at N1442 and N1468. The segment covering E1469–T1480 has biased composition (low complexity). Positions K1517–E1538 are enriched in basic and acidic residues. O-linked (Xyl...) (chondroitin sulfate) serine glycosylation is found at S1548 and S1631. Residue N1663 is glycosylated (N-linked (GlcNAc...) asparagine). 2 disordered regions span residues S1717 to T1737 and P1759 to S1789. Over residues V1720–E1729 the composition is skewed to basic and acidic residues. Polar residues predominate over residues N1760–Q1781. Residue N1898 is glycosylated (N-linked (GlcNAc...) asparagine). O-linked (Xyl...) (chondroitin sulfate) serine glycosylation is found at S1935 and S1959. Disordered regions lie at residues A1962–V1994, R2107–A2134, and K2168–N2188. Residues T1969–V1978 are compositionally biased toward low complexity. The span at E2111–I2120 shows a compositional bias: acidic residues. S2116 is subject to Phosphoserine; by FAM20C. N-linked (GlcNAc...) asparagine glycosylation is present at N2179. S2247 and S2254 each carry an O-linked (Xyl...) (chondroitin sulfate) serine glycan. 5 N-linked (GlcNAc...) asparagine glycosylation sites follow: N2272, N2280, N2360, N2385, and N2392. 4 disordered regions span residues T2371–T2396, S2445–S2473, S2493–G2518, and D2598–T2617. Polar residues-rich tracts occupy residues S2445–S2461 and N2496–E2513. N2496 carries N-linked (GlcNAc...) asparagine glycosylation. At S2608 the chain carries Phosphoserine. Phosphothreonine is present on T2617. A glycan (N-linked (GlcNAc...) asparagine) is linked at N2628. 3 O-linked (Xyl...) (chondroitin sulfate) serine glycosylation sites follow: S2722, S2723, and S2767. 2 disordered regions span residues G2834–S2856 and E2881–G2905. Residues T2896 to G2905 are compositionally biased toward basic and acidic residues. N2934 carries N-linked (GlcNAc...) asparagine glycosylation. O-linked (Xyl...) (chondroitin sulfate) serine glycosylation occurs at S2941. A glycan (N-linked (GlcNAc...) asparagine) is linked at N3067. The EGF-like 1 domain maps to G3089–E3125. Intrachain disulfides connect C3093/C3104, C3098/C3113, C3115/C3124, C3131/C3142, C3136/C3151, C3153/C3162, C3169/C3180, C3197/C3289, C3265/C3281, C3296/C3339, and C3325/C3352. The EGF-like 2; calcium-binding domain occupies D3127–E3163. The region spanning F3176–K3290 is the C-type lectin domain. Positions V3294 to N3354 constitute a Sushi domain. 2 N-linked (GlcNAc...) asparagine glycosylation sites follow: N3369 and N3379. The span at S3371–T3380 shows a compositional bias: polar residues. Positions S3371–R3396 are disordered.

Belongs to the aggrecan/versican proteoglycan family. As to quaternary structure, interacts with FBLN1. Phosphorylated by FAM20C in the extracellular medium. In terms of processing, proteolytically cleaved by ADAMTS5 and ADAMTS15 in the pericellular matrix surrounding myoblasts, facilitating myoblast contact and fusion which is required for skeletal muscle development and regeneration. As to expression, detected in placenta (at protein level). Detected in cerebrospinal fluid, fibroblasts and urine (at protein level). Expressed in the retina (at protein level). Cerebral white matter and plasma. Isoform V0: Expressed in normal brain, gliomas, medulloblastomas, schwannomas, neurofibromas, and meningiomas. Isoform V1: Expressed in normal brain, gliomas, medulloblastomas, schwannomas, neurofibromas, and meningiomas. Isoform V2: Restricted to normal brain and gliomas. Isoform V3: Found in all these tissues except medulloblastomas.

The protein resides in the secreted. It localises to the extracellular space. The protein localises to the extracellular matrix. It is found in the cell projection. Its subcellular location is the cilium. The protein resides in the photoreceptor outer segment. It localises to the interphotoreceptor matrix. In terms of biological role, may play a role in intercellular signaling and in connecting cells with the extracellular matrix. May take part in the regulation of cell motility, growth and differentiation. Binds hyaluronic acid. This Homo sapiens (Human) protein is Versican core protein (VCAN).